A 186-amino-acid chain; its full sequence is Adenine phosphoribosyltransferase (186 aa).

Belongs to the purine/pyrimidine phosphoribosyltransferase family. As to quaternary structure, homodimer.

It localises to the cytoplasm. It carries out the reaction AMP + diphosphate = 5-phospho-alpha-D-ribose 1-diphosphate + adenine. It functions in the pathway purine metabolism; AMP biosynthesis via salvage pathway; AMP from adenine: step 1/1. Its function is as follows. Catalyzes a salvage reaction resulting in the formation of AMP, that is energically less costly than de novo synthesis. This Xanthomonas campestris pv. campestris (strain 8004) protein is Adenine phosphoribosyltransferase.